The following is a 491-amino-acid chain: Protein nucleotidyltransferase YdiU (491 aa).

Residues G94, G96, R97, K117, D129, G130, R180, and R187 each coordinate ATP. Residue D256 is the Proton acceptor of the active site. 2 residues coordinate Mg(2+): N257 and D266. Position 266 (D266) interacts with ATP.

Belongs to the SELO family. Requires Mg(2+) as cofactor. Mn(2+) is required as a cofactor.

The enzyme catalyses L-seryl-[protein] + ATP = 3-O-(5'-adenylyl)-L-seryl-[protein] + diphosphate. The catalysed reaction is L-threonyl-[protein] + ATP = 3-O-(5'-adenylyl)-L-threonyl-[protein] + diphosphate. It carries out the reaction L-tyrosyl-[protein] + ATP = O-(5'-adenylyl)-L-tyrosyl-[protein] + diphosphate. It catalyses the reaction L-histidyl-[protein] + UTP = N(tele)-(5'-uridylyl)-L-histidyl-[protein] + diphosphate. The enzyme catalyses L-seryl-[protein] + UTP = O-(5'-uridylyl)-L-seryl-[protein] + diphosphate. The catalysed reaction is L-tyrosyl-[protein] + UTP = O-(5'-uridylyl)-L-tyrosyl-[protein] + diphosphate. Its function is as follows. Nucleotidyltransferase involved in the post-translational modification of proteins. It can catalyze the addition of adenosine monophosphate (AMP) or uridine monophosphate (UMP) to a protein, resulting in modifications known as AMPylation and UMPylation. This chain is Protein nucleotidyltransferase YdiU, found in Brevibacillus brevis (strain 47 / JCM 6285 / NBRC 100599).